The following is a 220-amino-acid chain: MGFSSFISQPLSSSLSVMKRNVSAKRSELCLDSSKIRLDHRWSFIGGSRISVQSNSYTVVHKKFSGVRASWLTTTQIASSVFAVGTTAVLPFYTLMVVAPKAEITKKCMESSVPYIILGVLYVYLLYISWTPETLKYMFSSKYMLPELSGIAKMFSSEMTLASAWIHLLVVDLFAARQVYNDGLENQIETRHSVSLCLLFCPVGIVSHFVTKAIINNQYK.

The N-terminal 37 residues, 1-37, are a transit peptide targeting the chloroplast; that stretch reads MGFSSFISQPLSSSLSVMKRNVSAKRSELCLDSSKIR. The next 4 membrane-spanning stretches (helical) occupy residues 77 to 97, 112 to 132, 154 to 174, and 195 to 215; these read IASSVFAVGTTAVLPFYTLMV, SVPYIILGVLYVYLLYISWTP, MFSSEMTLASAWIHLLVVDLF, and SLCLLFCPVGIVSHFVTKAII.

Expressed in root vasculature, root hairs, leaves, trichomes, sepals, stamens, stigma, pedicels, siliques and embryo.

It is found in the plastid. The protein localises to the chloroplast membrane. Required for neoxanthin biosynthesis, an intermediary step in abscisic acid (ABA) biosynthesis. Probably not involved directly in the enzymatic conversion of violaxanthin to neoxanthin. Cannot convert violaxanthin to neoxanthin in vitro. Required for ABA biosynthesis in response to drought stress. Required for neoxanthin biosynthesis which is involved in photoprotection of photosystem II (PSII). Neoxanthin acts as an antioxidant within the photosystem PSII supercomplex. This Arabidopsis thaliana (Mouse-ear cress) protein is Protein ABA DEFICIENT 4, chloroplastic.